A 144-amino-acid polypeptide reads, in one-letter code: Large-conductance mechanosensitive channel (144 aa).

The next 2 membrane-spanning stretches (helical) occupy residues 14–34 (VLDM…VTSF) and 81–101 (GTFL…FLII).

It belongs to the MscL family. As to quaternary structure, homopentamer.

The protein localises to the cell inner membrane. Functionally, channel that opens in response to stretch forces in the membrane lipid bilayer. May participate in the regulation of osmotic pressure changes within the cell. The protein is Large-conductance mechanosensitive channel of Bdellovibrio bacteriovorus (strain ATCC 15356 / DSM 50701 / NCIMB 9529 / HD100).